A 242-amino-acid polypeptide reads, in one-letter code: ATP-dependent dethiobiotin synthetase BioD (242 aa).

12 to 17 (EVGKTV) is a binding site for ATP. Threonine 16 provides a ligand contact to Mg(2+). Lysine 37 is a catalytic residue. Serine 41 lines the substrate pocket. ATP is bound by residues aspartate 51 and 112-115 (EGAG). Mg(2+) contacts are provided by aspartate 51 and glutamate 112.

The protein belongs to the dethiobiotin synthetase family. Homodimer. The cofactor is Mg(2+).

Its subcellular location is the cytoplasm. It carries out the reaction (7R,8S)-7,8-diammoniononanoate + CO2 + ATP = (4R,5S)-dethiobiotin + ADP + phosphate + 3 H(+). The protein operates within cofactor biosynthesis; biotin biosynthesis; biotin from 7,8-diaminononanoate: step 1/2. In terms of biological role, catalyzes a mechanistically unusual reaction, the ATP-dependent insertion of CO2 between the N7 and N8 nitrogen atoms of 7,8-diaminopelargonic acid (DAPA, also called 7,8-diammoniononanoate) to form a ureido ring. The sequence is that of ATP-dependent dethiobiotin synthetase BioD from Bacillus cereus (strain ATCC 14579 / DSM 31 / CCUG 7414 / JCM 2152 / NBRC 15305 / NCIMB 9373 / NCTC 2599 / NRRL B-3711).